Reading from the N-terminus, the 347-residue chain is Protein RecA (347 aa).

ATP is bound at residue 65-72; the sequence is GPESSGKT. The span at 327-336 shows a compositional bias: basic and acidic residues; the sequence is KFEPTELSRE. Positions 327–347 are disordered; the sequence is KFEPTELSREEGDEDTLEDAM. Over residues 337–347 the composition is skewed to acidic residues; sequence EGDEDTLEDAM.

The protein belongs to the RecA family.

The protein resides in the cytoplasm. In terms of biological role, can catalyze the hydrolysis of ATP in the presence of single-stranded DNA, the ATP-dependent uptake of single-stranded DNA by duplex DNA, and the ATP-dependent hybridization of homologous single-stranded DNAs. It interacts with LexA causing its activation and leading to its autocatalytic cleavage. This is Protein RecA from Xylella fastidiosa (strain M12).